A 393-amino-acid chain; its full sequence is Triacylglycerol lipase 1 (393 aa).

The N-terminal stretch at M1 to Q20 is a signal peptide. An N-linked (GlcNAc...) asparagine glycan is attached at N41. S166 acts as the Nucleophile in catalysis. N261 carries N-linked (GlcNAc...) asparagine glycosylation. Catalysis depends on charge relay system residues D334 and H363.

The protein belongs to the AB hydrolase superfamily. Lipase family. As to expression, expressed in seedlings, roots, leaves, flowers and siliques. Specifically expressed in the epidermis.

It is found in the secreted. The enzyme catalyses a triacylglycerol + H2O = a diacylglycerol + a fatty acid + H(+). The catalysed reaction is 1,2,3-tributanoylglycerol + H2O = dibutanoylglycerol + butanoate + H(+). It catalyses the reaction 1,2,3-trioctanoylglycerol + H2O = dioctanoylglycerol + octanoate + H(+). It participates in lipid metabolism; glycerolipid metabolism. In terms of biological role, triacylglycerol (TAG) lipase active on triolein, trioctanoin, tributyrin and 1,3-Diolein, but not on phospho- and galactolipids. Involved but dispensable for TAG storage breakdown during seed germination. The polypeptide is Triacylglycerol lipase 1 (Arabidopsis thaliana (Mouse-ear cress)).